Here is a 487-residue protein sequence, read N- to C-terminus: Cysteine--tRNA ligase (487 aa).

Cys29 contacts Zn(2+). The 'HIGH' region signature appears at Val31–His41. Zn(2+)-binding residues include Cys209, His234, and Glu238. A 'KMSKS' region motif is present at residues Lys266–Ser270. Residue Lys269 participates in ATP binding.

The protein belongs to the class-I aminoacyl-tRNA synthetase family. As to quaternary structure, monomer. Zn(2+) is required as a cofactor.

The protein localises to the cytoplasm. It catalyses the reaction tRNA(Cys) + L-cysteine + ATP = L-cysteinyl-tRNA(Cys) + AMP + diphosphate. This is Cysteine--tRNA ligase from Trichlorobacter lovleyi (strain ATCC BAA-1151 / DSM 17278 / SZ) (Geobacter lovleyi).